A 382-amino-acid polypeptide reads, in one-letter code: Carboxynorspermidine/carboxyspermidine decarboxylase (382 aa).

Lys-41 carries the N6-(pyridoxal phosphate)lysine modification. Glu-236 and Asp-272 together coordinate substrate.

The protein belongs to the Orn/Lys/Arg decarboxylase class-II family. NspC subfamily. In terms of assembly, homodimer. It depends on pyridoxal 5'-phosphate as a cofactor.

Its subcellular location is the cytoplasm. The enzyme catalyses carboxynorspermidine + H(+) = norspermidine + CO2. The catalysed reaction is carboxyspermidine + H(+) = spermidine + CO2. In terms of biological role, catalyzes the decarboxylation of carboxynorspermidine and carboxyspermidine in vitro. In vivo, responsible for synthesizing spermidine, but not sym-norspermidine. The protein is Carboxynorspermidine/carboxyspermidine decarboxylase of Campylobacter jejuni subsp. jejuni serotype O:6 (strain 81116 / NCTC 11828).